Consider the following 336-residue polypeptide: Holliday junction branch migration complex subunit RuvB (336 aa).

The large ATPase domain (RuvB-L) stretch occupies residues alanine 4–tyrosine 184. ATP is bound by residues isoleucine 23, arginine 24, glycine 65, lysine 68, threonine 69, threonine 70, glutamate 131–tyrosine 133, arginine 174, tyrosine 184, and arginine 221. Residue threonine 69 coordinates Mg(2+). The small ATPAse domain (RuvB-S) stretch occupies residues glutamine 185–asparagine 255. Residues alanine 258–proline 336 form a head domain (RuvB-H) region. Arginine 294, arginine 313, and arginine 318 together coordinate DNA.

It belongs to the RuvB family. In terms of assembly, homohexamer. Forms an RuvA(8)-RuvB(12)-Holliday junction (HJ) complex. HJ DNA is sandwiched between 2 RuvA tetramers; dsDNA enters through RuvA and exits via RuvB. An RuvB hexamer assembles on each DNA strand where it exits the tetramer. Each RuvB hexamer is contacted by two RuvA subunits (via domain III) on 2 adjacent RuvB subunits; this complex drives branch migration. In the full resolvosome a probable DNA-RuvA(4)-RuvB(12)-RuvC(2) complex forms which resolves the HJ.

It localises to the cytoplasm. The catalysed reaction is ATP + H2O = ADP + phosphate + H(+). Its function is as follows. The RuvA-RuvB-RuvC complex processes Holliday junction (HJ) DNA during genetic recombination and DNA repair, while the RuvA-RuvB complex plays an important role in the rescue of blocked DNA replication forks via replication fork reversal (RFR). RuvA specifically binds to HJ cruciform DNA, conferring on it an open structure. The RuvB hexamer acts as an ATP-dependent pump, pulling dsDNA into and through the RuvAB complex. RuvB forms 2 homohexamers on either side of HJ DNA bound by 1 or 2 RuvA tetramers; 4 subunits per hexamer contact DNA at a time. Coordinated motions by a converter formed by DNA-disengaged RuvB subunits stimulates ATP hydrolysis and nucleotide exchange. Immobilization of the converter enables RuvB to convert the ATP-contained energy into a lever motion, pulling 2 nucleotides of DNA out of the RuvA tetramer per ATP hydrolyzed, thus driving DNA branch migration. The RuvB motors rotate together with the DNA substrate, which together with the progressing nucleotide cycle form the mechanistic basis for DNA recombination by continuous HJ branch migration. Branch migration allows RuvC to scan DNA until it finds its consensus sequence, where it cleaves and resolves cruciform DNA. This chain is Holliday junction branch migration complex subunit RuvB, found in Salmonella arizonae (strain ATCC BAA-731 / CDC346-86 / RSK2980).